Reading from the N-terminus, the 166-residue chain is Large ribosomal subunit protein uL10 (166 aa).

This sequence belongs to the universal ribosomal protein uL10 family. Part of the ribosomal stalk of the 50S ribosomal subunit. The N-terminus interacts with L11 and the large rRNA to form the base of the stalk. The C-terminus forms an elongated spine to which L12 dimers bind in a sequential fashion forming a multimeric L10(L12)X complex.

Functionally, forms part of the ribosomal stalk, playing a central role in the interaction of the ribosome with GTP-bound translation factors. The chain is Large ribosomal subunit protein uL10 (rplJ) from Streptococcus pyogenes serotype M18 (strain MGAS8232).